Here is a 695-residue protein sequence, read N- to C-terminus: Follicle-stimulating hormone receptor (695 aa).

The first 17 residues, 1–17, serve as a signal peptide directing secretion; it reads MTFLLVSLLAFLSLGSG. 2 cysteine pairs are disulfide-bonded: Cys18–Cys25 and Cys23–Cys32. In terms of domain architecture, LRRNT spans 18–46; that stretch reads CHHRICHCWHRVFLCQESKVTEIPSDLPR. The Extracellular portion of the chain corresponds to 18–366; sequence CHHRICHCWH…EDIMGYDILR (349 aa). LRR repeat units lie at residues 49-72, 73-97, 98-118, 119-143, 144-169, 170-192, 193-216, 217-240, and 241-259; these read VELRFVLTKLRVIPKGAFSGFGDL, EKIEISQNDVLEVIEANVFFNLSKL, HEIRIEKANNLLYIDTDAFQN, LPNLRYLLISNTGIKHFPAVHKIQS, LQKVLLDIQDNINIHTVERNSFMGLS, FESMILWLNKNGIQEIHNCAFNG, TQLDELNLSDNINLEELPNDVFQG, ASGPVILDISRTRIHSLPSYGLEN, and IKKLRAKSTYNLKKLPSLD. Asn93 carries N-linked (GlcNAc...) asparagine glycosylation. Asn191 and Asn199 each carry an N-linked (GlcNAc...) asparagine glycan. Cystine bridges form between Cys275/Cys346, Cys276/Cys292, Cys276/Cys356, and Cys292/Cys338. Asn293 carries N-linked (GlcNAc...) asparagine glycosylation. Sulfotyrosine is present on Tyr335. Residues 367–387 traverse the membrane as a helical segment; sequence VLIWFISILAITGNIIVLMIL. Residues 388 to 398 are Cytoplasmic-facing; sequence ITSQYKLTVPR. Residues 399–419 form a helical membrane-spanning segment; that stretch reads FLMCNLAFADLCIGIYLLLIA. The Extracellular segment spans residues 420–444; the sequence is SVDIYTKSQYHNYAIDWQTGAGCDA. The helical transmembrane segment at 445–465 threads the bilayer; that stretch reads AGFFTVFASELSVYTLTVITL. The Cytoplasmic portion of the chain corresponds to 466–487; that stretch reads ERWHTITHAMQLECKVQLRHAA. Residues 488–508 traverse the membrane as a helical segment; it reads IIMLLGWIFAFMVALFPIFGI. At 509–528 the chain is on the extracellular side; it reads SSYMKVSICLPMDIDSPLSQ. Residues 529–550 form a helical membrane-spanning segment; it reads LYVMSLLVLNVLAFVVICCCYA. Residues 551-573 are Cytoplasmic-facing; it reads HIYLTVRNPNIVSSSSDTKIAKR. Residues 574-594 form a helical membrane-spanning segment; that stretch reads MAMLIFTDFLCMAPISFFAIS. The Extracellular segment spans residues 595-608; the sequence is ASLKVPLITVSKSK. A helical membrane pass occupies residues 609 to 629; the sequence is ILLVLFYPINSCANPFLYAIF. The Cytoplasmic segment spans residues 630-695; it reads TKNFRRDFFI…LIPLRHLAKN (66 aa).

Belongs to the G-protein coupled receptor 1 family. FSH/LSH/TSH subfamily. Homotrimer. Functions as a homotrimer binding the FSH hormone heterodimer composed of CGA and FSHB. Interacts with ARRB2. Interacts with APPL2; interaction is independent of follicle stimulating hormone stimulation. Post-translationally, N-glycosylated; indirectly required for FSH-binding, possibly via a conformational change that allows high affinity binding of hormone. Sulfated.

It localises to the cell membrane. G protein-coupled receptor for follitropin, the follicle-stimulating hormone. Through cAMP production activates the downstream PI3K-AKT and ERK1/ERK2 signaling pathways. This chain is Follicle-stimulating hormone receptor (FSHR), found in Felis catus (Cat).